The primary structure comprises 344 residues: Ketol-acid reductoisomerase (NADP(+)) (344 aa).

In terms of domain architecture, KARI N-terminal Rossmann spans 1-181 (MATMYYEQNI…GAARGGLLET (181 aa)). NADP(+) contacts are provided by residues 25 to 28 (YGSQ), Arg-48, Ser-52, and 82 to 85 (DERQ). Residue His-107 is part of the active site. Residue Gly-133 participates in NADP(+) binding. In terms of domain architecture, KARI C-terminal knotted spans 182–327 (TFKEETETDL…AKLREMMPFI (146 aa)). Mg(2+) is bound by residues Asp-190, Glu-194, Glu-226, and Glu-230. Position 251 (Ser-251) interacts with substrate.

Belongs to the ketol-acid reductoisomerase family. The cofactor is Mg(2+).

The catalysed reaction is (2R)-2,3-dihydroxy-3-methylbutanoate + NADP(+) = (2S)-2-acetolactate + NADPH + H(+). The enzyme catalyses (2R,3R)-2,3-dihydroxy-3-methylpentanoate + NADP(+) = (S)-2-ethyl-2-hydroxy-3-oxobutanoate + NADPH + H(+). It functions in the pathway amino-acid biosynthesis; L-isoleucine biosynthesis; L-isoleucine from 2-oxobutanoate: step 2/4. Its pathway is amino-acid biosynthesis; L-valine biosynthesis; L-valine from pyruvate: step 2/4. Functionally, involved in the biosynthesis of branched-chain amino acids (BCAA). Catalyzes an alkyl-migration followed by a ketol-acid reduction of (S)-2-acetolactate (S2AL) to yield (R)-2,3-dihydroxy-isovalerate. In the isomerase reaction, S2AL is rearranged via a Mg-dependent methyl migration to produce 3-hydroxy-3-methyl-2-ketobutyrate (HMKB). In the reductase reaction, this 2-ketoacid undergoes a metal-dependent reduction by NADPH to yield (R)-2,3-dihydroxy-isovalerate. This chain is Ketol-acid reductoisomerase (NADP(+)), found in Lysinibacillus sphaericus (strain C3-41).